Reading from the N-terminus, the 461-residue chain is Cysteine--tRNA ligase (461 aa).

Zn(2+) is bound at residue Cys28. Positions Ile30–His40 match the 'HIGH' region motif. 3 residues coordinate Zn(2+): Cys209, His234, and Glu238. The 'KMSKS' region motif lies at Lys266 to Ser270. Residue Lys269 participates in ATP binding.

The protein belongs to the class-I aminoacyl-tRNA synthetase family. In terms of assembly, monomer. It depends on Zn(2+) as a cofactor.

It localises to the cytoplasm. It catalyses the reaction tRNA(Cys) + L-cysteine + ATP = L-cysteinyl-tRNA(Cys) + AMP + diphosphate. In Yersinia pseudotuberculosis serotype IB (strain PB1/+), this protein is Cysteine--tRNA ligase.